A 311-amino-acid chain; its full sequence is Aspartate carbamoyltransferase catalytic subunit (311 aa).

Carbamoyl phosphate contacts are provided by Arg-55 and Thr-56. An L-aspartate-binding site is contributed by Lys-85. Residues Arg-106, His-135, and Gln-138 each contribute to the carbamoyl phosphate site. The L-aspartate site is built by Arg-168 and Arg-230. 2 residues coordinate carbamoyl phosphate: Leu-268 and Pro-269.

This sequence belongs to the aspartate/ornithine carbamoyltransferase superfamily. ATCase family. Heterododecamer (2C3:3R2) of six catalytic PyrB chains organized as two trimers (C3), and six regulatory PyrI chains organized as three dimers (R2).

It catalyses the reaction carbamoyl phosphate + L-aspartate = N-carbamoyl-L-aspartate + phosphate + H(+). It participates in pyrimidine metabolism; UMP biosynthesis via de novo pathway; (S)-dihydroorotate from bicarbonate: step 2/3. Its function is as follows. Catalyzes the condensation of carbamoyl phosphate and aspartate to form carbamoyl aspartate and inorganic phosphate, the committed step in the de novo pyrimidine nucleotide biosynthesis pathway. The polypeptide is Aspartate carbamoyltransferase catalytic subunit (Klebsiella pneumoniae subsp. pneumoniae (strain ATCC 700721 / MGH 78578)).